The chain runs to 683 residues: MTHPDRSAHDLNVPIQHSGRWFQDNLGRTLLLRGINVCGSSKLPTRPYPGSTHLYDDILFWDHRNVSFVNRPFPLEDAHEHFSRLSAWGLTLIRLLVPWESIEHEGPGCYDEEYIDYLRQLIEMMPRYGIKCIIDPHQDTWSRFSGGSGAPGWTFEVAGLNIKHFKETGAAYVHNTNAVPGDPLPMVWPTNYTKLASCTMFTLFFAGDTFAPHRTYQSQSIQQFLNHHFIEAYRHLAERLSDLEAVLAFEFMNEPHPGYIGLDHLDSFDPIMNLLFGDSPTPLQSFALGDGIPQTVDVYIKSWPFPTKKSHDRVINASQTSAWFSGCVWKEHGVWTVDDQGVPRLVNTHYFSKHPKTGEKISFYEDFYKPLVNRYVAAIQSVKKEYYCLVEPLANEKPPVYNEHDHHHNVIFSPHWYDLDSVFYKKFNARMTHDVQCLQRGGNVFSATYFGKRGAKKNYRGQIKNIKEDGLLNMGEKPCIMGEVGIPMDLNNKMAFEDDNYENHVHFMDAIIYALETNLISFTLWNYDVFNDHEYGDHWNGENFSIYSVKKSEEDYMRHDDGNSKLSKKHLYDGGRVLEAVLRPYAAKVAGTPVSAEFNIDTLQYTFSFIPDCKGSTTTEIFVPYFHYGNKTIKTDVSFGRCSYIEEFQTLYHQYELNDPLPKLVTITMGILTTESANSCSVM.

The Proton donor role is filled by Glu-254. The active-site Nucleophile is Glu-483.

It belongs to the glycosyl hydrolase 5 (cellulase A) family.

It is found in the membrane. The enzyme catalyses a beta-D-glucosyl-(1&lt;-&gt;1')-N-acylsphing-4-enine + H2O = an N-acylsphing-4-enine + D-glucose. With respect to regulation, inhibited by metal cations Co(2+), Cu(2+), Ni(2+), Pb(2+) and Zn(2+). Not inhibited by metal chelator ethylenediaminetetraacetic acid (EDTA). Specifically hydrolyzes the glucosidic linkage in glucosylceramide. May prevent accumulation of aberrent glucosylceramide containing immature ceramide. The sequence is that of Glucosylceramidase from Rhizopus delemar (strain RA 99-880 / ATCC MYA-4621 / FGSC 9543 / NRRL 43880) (Mucormycosis agent).